The following is a 288-amino-acid chain: Oxaloacetate decarboxylase (288 aa).

Serine 47 serves as a coordination point for substrate. Mg(2+) is bound at residue aspartate 85. Residues arginine 156 and histidine 232 each contribute to the substrate site.

It belongs to the isocitrate lyase/PEP mutase superfamily. Oxaloacetate decarboxylase family. Homotetramer; dimer of dimers. Mg(2+) serves as cofactor.

It catalyses the reaction oxaloacetate + H(+) = pyruvate + CO2. In terms of biological role, catalyzes the decarboxylation of oxaloacetate into pyruvate. Seems to play a role in maintaining cellular concentrations of bicarbonate and pyruvate. This chain is Oxaloacetate decarboxylase, found in Bradyrhizobium diazoefficiens (strain JCM 10833 / BCRC 13528 / IAM 13628 / NBRC 14792 / USDA 110).